Here is a 205-residue protein sequence, read N- to C-terminus: Ribosomal RNA large subunit methyltransferase E (205 aa).

S-adenosyl-L-methionine-binding residues include glycine 50, tryptophan 52, aspartate 67, asparagine 83, and aspartate 111. Residue lysine 151 is the Proton acceptor of the active site.

It belongs to the class I-like SAM-binding methyltransferase superfamily. RNA methyltransferase RlmE family.

The protein resides in the cytoplasm. The enzyme catalyses uridine(2552) in 23S rRNA + S-adenosyl-L-methionine = 2'-O-methyluridine(2552) in 23S rRNA + S-adenosyl-L-homocysteine + H(+). Functionally, specifically methylates the uridine in position 2552 of 23S rRNA at the 2'-O position of the ribose in the fully assembled 50S ribosomal subunit. This chain is Ribosomal RNA large subunit methyltransferase E, found in Thermoplasma acidophilum (strain ATCC 25905 / DSM 1728 / JCM 9062 / NBRC 15155 / AMRC-C165).